A 371-amino-acid polypeptide reads, in one-letter code: uncharacterized protein (371 aa).

Transmembrane regions (helical) follow at residues L4–G24, L60–G82, L87–I109, V130–S150, V197–V217, I224–V244, V282–A302, and F320–G340.

Belongs to the peptide transporter carbon starvation (CstA) (TC 2.A.114) family.

It is found in the cell membrane. This is an uncharacterized protein from Haemophilus influenzae (strain ATCC 51907 / DSM 11121 / KW20 / Rd).